The primary structure comprises 260 residues: Phosphate import ATP-binding protein PstB (260 aa).

Residues 13–255 (MRAQGVNVFY…PKQERTKDYI (243 aa)) enclose the ABC transporter domain. Residue 45–52 (GPSGCGKS) coordinates ATP.

This sequence belongs to the ABC transporter superfamily. Phosphate importer (TC 3.A.1.7) family. As to quaternary structure, the complex is composed of two ATP-binding proteins (PstB), two transmembrane proteins (PstC and PstA) and a solute-binding protein (PstS).

It localises to the cell inner membrane. The enzyme catalyses phosphate(out) + ATP + H2O = ADP + 2 phosphate(in) + H(+). Part of the ABC transporter complex PstSACB involved in phosphate import. Responsible for energy coupling to the transport system. In Sphingopyxis alaskensis (strain DSM 13593 / LMG 18877 / RB2256) (Sphingomonas alaskensis), this protein is Phosphate import ATP-binding protein PstB.